We begin with the raw amino-acid sequence, 393 residues long: Tryptophan synthase beta chain (393 aa).

N6-(pyridoxal phosphate)lysine is present on K86.

Belongs to the TrpB family. As to quaternary structure, tetramer of two alpha and two beta chains. Pyridoxal 5'-phosphate serves as cofactor.

The enzyme catalyses (1S,2R)-1-C-(indol-3-yl)glycerol 3-phosphate + L-serine = D-glyceraldehyde 3-phosphate + L-tryptophan + H2O. It participates in amino-acid biosynthesis; L-tryptophan biosynthesis; L-tryptophan from chorismate: step 5/5. Functionally, the beta subunit is responsible for the synthesis of L-tryptophan from indole and L-serine. The polypeptide is Tryptophan synthase beta chain (Alteromonas mediterranea (strain DSM 17117 / CIP 110805 / LMG 28347 / Deep ecotype)).